Reading from the N-terminus, the 130-residue chain is Small ribosomal subunit protein uS9 (130 aa).

This sequence belongs to the universal ribosomal protein uS9 family.

The polypeptide is Small ribosomal subunit protein uS9 (Idiomarina loihiensis (strain ATCC BAA-735 / DSM 15497 / L2-TR)).